Here is a 403-residue protein sequence, read N- to C-terminus: Phospholipase A1-II 2 (403 aa).

Ser218 functions as the Acyl-ester intermediate in the catalytic mechanism. Residues Ser218, Asp286, and His323 each act as charge relay system in the active site. Residues 381–403 (GPDGRWVLQDHEPDDDDDDDDDD) form a disordered region. The segment covering 392–403 (EPDDDDDDDDDD) has biased composition (acidic residues).

This sequence belongs to the AB hydrolase superfamily. Lipase family.

The protein localises to the cytoplasm. Functionally, acylhydrolase that catalyzes the hydrolysis of phospholipids at the sn-1 position. The protein is Phospholipase A1-II 2 of Oryza sativa subsp. indica (Rice).